The chain runs to 194 residues: Ras-related protein RabU (194 aa).

G19–K27 provides a ligand contact to GTP. An Effector region motif is present at residues P42 to F50. Residues P68 to Y72 and N130 to E133 each bind GTP.

Belongs to the small GTPase superfamily. Rab family.

This chain is Ras-related protein RabU (rabU), found in Dictyostelium discoideum (Social amoeba).